The primary structure comprises 184 residues: MTEELADNYRHIIAGLGEDPDREGLRDTPKRAAKAMQFLTQGYGQTLESLVNGAVFESQTDEMVLIKDIELYSMCEHHLLPFIGKCHIAYLPEGRVLGLSKFARIVDMYARRMQIQENLTRQIAEAVQQVTQARGVGVIIEAQHMCMMMRGVEKQNSSMKTSVMLGAFRNNLTTRQEFLTLVHG.

The Zn(2+) site is built by Cys-75, His-78, and Cys-146.

This sequence belongs to the GTP cyclohydrolase I family. Toroid-shaped homodecamer, composed of two pentamers of five dimers.

It carries out the reaction GTP + H2O = 7,8-dihydroneopterin 3'-triphosphate + formate + H(+). It participates in cofactor biosynthesis; 7,8-dihydroneopterin triphosphate biosynthesis; 7,8-dihydroneopterin triphosphate from GTP: step 1/1. The sequence is that of GTP cyclohydrolase 1 from Chromohalobacter salexigens (strain ATCC BAA-138 / DSM 3043 / CIP 106854 / NCIMB 13768 / 1H11).